The sequence spans 347 residues: Metacaspase-2 (347 aa).

The segment at 1-70 (MCSLITQLCD…QPWVATPLPG (70 aa)) is regulates substrate access to the active site. Histidine 158 is an active-site residue. Ca(2+) is bound by residues aspartate 173, aspartate 189, and aspartate 190. The active site involves cysteine 213. Aspartate 220 is a Ca(2+) binding site.

Belongs to the peptidase C14B family. In terms of assembly, monomer. In terms of processing, auto-proteolytic cleavage of the propeptide after Lys-55 and between the large and small subunits after Lys-268 is required for catalytic activity towards large protein substrates but is dispensable towards small oligopeptide substrates. After processing, the propeptide and the large and small subunits remain associated by non-covalent bonds. In vivo, the unprocessed enzyme appears to be the predominant form.

The protein resides in the recycling endosome. Activated by Ca(2+). In response to calcium binding, the 280-loop, the 280-loop, a disordered loop consisting of residues 269-275, undergoes a conformational change which stabilizes substrates in the active site. The binding to the substrate triggers the release of the N-terminal region resulting in the activation of the enzyme. Proteolytic cleavage is required for catalytic activity towards large protein substrates. Cysteine protease that cleaves specifically after arginine or lysine residues. The sequence is that of Metacaspase-2 from Trypanosoma brucei brucei.